Reading from the N-terminus, the 474-residue chain is Aspartyl/glutamyl-tRNA(Asn/Gln) amidotransferase subunit B (474 aa).

This sequence belongs to the GatB/GatE family. GatB subfamily. As to quaternary structure, heterotrimer of A, B and C subunits.

It catalyses the reaction L-glutamyl-tRNA(Gln) + L-glutamine + ATP + H2O = L-glutaminyl-tRNA(Gln) + L-glutamate + ADP + phosphate + H(+). The catalysed reaction is L-aspartyl-tRNA(Asn) + L-glutamine + ATP + H2O = L-asparaginyl-tRNA(Asn) + L-glutamate + ADP + phosphate + 2 H(+). Functionally, allows the formation of correctly charged Asn-tRNA(Asn) or Gln-tRNA(Gln) through the transamidation of misacylated Asp-tRNA(Asn) or Glu-tRNA(Gln) in organisms which lack either or both of asparaginyl-tRNA or glutaminyl-tRNA synthetases. The reaction takes place in the presence of glutamine and ATP through an activated phospho-Asp-tRNA(Asn) or phospho-Glu-tRNA(Gln). In Wolbachia sp. subsp. Brugia malayi (strain TRS), this protein is Aspartyl/glutamyl-tRNA(Asn/Gln) amidotransferase subunit B.